Consider the following 469-residue polypeptide: Aspartyl/glutamyl-tRNA(Asn/Gln) amidotransferase subunit B (469 aa).

It belongs to the GatB/GatE family. GatB subfamily. In terms of assembly, heterotrimer of A, B and C subunits.

The enzyme catalyses L-glutamyl-tRNA(Gln) + L-glutamine + ATP + H2O = L-glutaminyl-tRNA(Gln) + L-glutamate + ADP + phosphate + H(+). It carries out the reaction L-aspartyl-tRNA(Asn) + L-glutamine + ATP + H2O = L-asparaginyl-tRNA(Asn) + L-glutamate + ADP + phosphate + 2 H(+). Allows the formation of correctly charged Asn-tRNA(Asn) or Gln-tRNA(Gln) through the transamidation of misacylated Asp-tRNA(Asn) or Glu-tRNA(Gln) in organisms which lack either or both of asparaginyl-tRNA or glutaminyl-tRNA synthetases. The reaction takes place in the presence of glutamine and ATP through an activated phospho-Asp-tRNA(Asn) or phospho-Glu-tRNA(Gln). The sequence is that of Aspartyl/glutamyl-tRNA(Asn/Gln) amidotransferase subunit B from Methanococcus maripaludis (strain C6 / ATCC BAA-1332).